Reading from the N-terminus, the 378-residue chain is Acetylornithine deacetylase (378 aa).

His76 provides a ligand contact to Zn(2+). Asp78 is a catalytic residue. Asp108 contributes to the Zn(2+) binding site. Residue Glu140 is part of the active site. Residues Glu141, Glu165, and His351 each coordinate Zn(2+).

It belongs to the peptidase M20A family. ArgE subfamily. As to quaternary structure, homodimer. The cofactor is Zn(2+). Requires Co(2+) as cofactor. Glutathione serves as cofactor.

It localises to the cytoplasm. It carries out the reaction N(2)-acetyl-L-ornithine + H2O = L-ornithine + acetate. It participates in amino-acid biosynthesis; L-arginine biosynthesis; L-ornithine from N(2)-acetyl-L-ornithine (linear): step 1/1. In terms of biological role, catalyzes the hydrolysis of the amide bond of N(2)-acetylated L-amino acids. Cleaves the acetyl group from N-acetyl-L-ornithine to form L-ornithine, an intermediate in L-arginine biosynthesis pathway, and a branchpoint in the synthesis of polyamines. This chain is Acetylornithine deacetylase, found in Vibrio campbellii (strain ATCC BAA-1116).